Here is a 116-residue protein sequence, read N- to C-terminus: NADH-ubiquinone oxidoreductase chain 3 (116 aa).

The next 3 membrane-spanning stretches (helical) occupy residues 3 to 23, 56 to 76, and 85 to 105; these read LLMT…IVSF, FFLI…LLPL, and PLLT…GLIY.

The protein belongs to the complex I subunit 3 family.

The protein localises to the mitochondrion membrane. It carries out the reaction a ubiquinone + NADH + 5 H(+)(in) = a ubiquinol + NAD(+) + 4 H(+)(out). Its function is as follows. Core subunit of the mitochondrial membrane respiratory chain NADH dehydrogenase (Complex I) that is believed to belong to the minimal assembly required for catalysis. Complex I functions in the transfer of electrons from NADH to the respiratory chain. The immediate electron acceptor for the enzyme is believed to be ubiquinone. This chain is NADH-ubiquinone oxidoreductase chain 3 (MT-ND3), found in Paralichthys olivaceus (Bastard halibut).